Reading from the N-terminus, the 480-residue chain is Endothelial transcription factor GATA-2 (480 aa).

Phosphoserine is present on serine 73. An Asymmetric dimethylarginine modification is found at arginine 86. The tract at residues 119–209 (SPFSKTPLHP…GSAARGEDKD (91 aa)) is disordered. The segment covering 143 to 153 (GAGGGSGGGSG) has biased composition (gly residues). Positions 185-203 (PSTTGAASPASSSAGGSAA) are enriched in low complexity. At serine 192 the chain carries Phosphoserine. 2 GATA-type zinc fingers span residues 295-319 (CVNCGATATPLWRRDGTGHYLCNAC) and 349-373 (CANCQTTTTTLWRRNANGDPVCNAC). A Glycyl lysine isopeptide (Lys-Gly) (interchain with G-Cter in SUMO2) cross-link involves residue lysine 389. Residues 448–480 (HSGHILPTPTPIHPSSSLSFGHPHPSSMVTAMG) form a disordered region.

As to quaternary structure, interacts with BRD3. Interacts with AR and CCAR1. Interacts with MDFIC. In terms of tissue distribution, endothelial cells.

It is found in the nucleus. Transcriptional activator which regulates endothelin-1 gene expression in endothelial cells. Binds to the consensus sequence 5'-AGATAG-3'. The protein is Endothelial transcription factor GATA-2 (GATA2) of Homo sapiens (Human).